The sequence spans 333 residues: Cilia- and flagella-associated protein 119 (333 aa).

Residues 1–10 (MITPSSSQSL) are compositionally biased toward polar residues. Disordered stretches follow at residues 1 to 70 (MITP…ANLF) and 309 to 333 (RLSS…TKTK). Ser-34 is modified (phosphoserine). Positions 44–58 (TDMQTESPAEATSSP) are enriched in polar residues. Residues 284-319 (IKSQLSKELRQLQQLVEERLKESEERLSSKLAALEQ) adopt a coiled-coil conformation.

Its subcellular location is the cell projection. The protein localises to the cilium. It is found in the flagellum. It localises to the cytoplasmic vesicle. The protein resides in the secretory vesicle. Its subcellular location is the acrosome. The protein localises to the cytoplasm. The chain is Cilia- and flagella-associated protein 119 from Mus musculus (Mouse).